The following is a 275-amino-acid chain: Phosphatidylglycerol--prolipoprotein diacylglyceryl transferase (275 aa).

3 consecutive transmembrane segments (helical) span residues 18–38 (IEVH…YFIA), 55–75 (IIFW…VIFQ), and 89–109 (IWHG…TGVI). An a 1,2-diacyl-sn-glycero-3-phospho-(1'-sn-glycerol)-binding site is contributed by Arg137. The next 2 helical transmembrane spans lie at 203–223 (IGET…FVEG) and 235–255 (IRVA…MIIY).

It belongs to the Lgt family.

The protein resides in the cell membrane. The enzyme catalyses L-cysteinyl-[prolipoprotein] + a 1,2-diacyl-sn-glycero-3-phospho-(1'-sn-glycerol) = an S-1,2-diacyl-sn-glyceryl-L-cysteinyl-[prolipoprotein] + sn-glycerol 1-phosphate + H(+). It functions in the pathway protein modification; lipoprotein biosynthesis (diacylglyceryl transfer). Functionally, catalyzes the transfer of the diacylglyceryl group from phosphatidylglycerol to the sulfhydryl group of the N-terminal cysteine of a prolipoprotein, the first step in the formation of mature lipoproteins. This Staphylococcus carnosus (strain TM300) protein is Phosphatidylglycerol--prolipoprotein diacylglyceryl transferase.